The sequence spans 275 residues: Echotoxin-2 (275 aa).

The signal sequence occupies residues 1-23 (MKRNILALVVVVALISQSRPAES). The segment at 23–32 (SAGGTIIATL) is plays an important role in the hemolytic activity. Positions 49 to 67 (ETGASVASAAAAATSSDYS) are N-terminal region. The phosphocholine site is built by Gly-123, Ser-141, Pro-143, Tyr-176, and Tyr-177. Positions 141–156 (SAPYNFDFYSNWLAVG) are trp-rich region, which is important for the binding to lipid membrane. Positions 249–275 (RAIQQELARRAEEEKQRKRKALDEMLK) are excised as a propeptide.

Belongs to the actinoporin family. Sea anemone subfamily. In terms of assembly, octamer or nonamer in membranes. Monomer in the soluble state. Salivary gland.

Its subcellular location is the secreted. The protein localises to the nematocyst. The protein resides in the target cell membrane. Functionally, pore-forming protein that forms cations-selective hydrophilic pores of around 1 nm and causes cardiac stimulation and cytolysis. Pore formation is a multi-step process that involves specific recognition of membrane sphingomyelin (but neither cholesterol nor phosphatidylcholine) using aromatic rich region and adjacent phosphocholine (POC) binding site, firm binding to the membrane (mainly driven by hydrophobic interactions) accompanied by the transfer of the N-terminal region to the lipid-water interface and finally pore formation after oligomerization of monomers. Exhibits both hemolytic and lethal activities. Gangliosides potently inhibits the hemolytic activity. The protein is Echotoxin-2 of Monoplex parthenopeus (Giant triton).